Consider the following 714-residue polypeptide: MGEPPRRPRELFLAGLAAAYLAAFVSLYLQIPGLYGRDGILPARRVLRLSGKGLWEQLRDVPTLLWLGPQLGLDTEQGMELLCLLGAVASMGALLCAPLRDCLLFAVLRVFYLSLYQVGQVFLYFQWDSLLLEAGFLAVLVAPLRLFKWRSTAWRPHDSVTFWLVRWLLFRLMFASGVVKLTSRCPTWWGLTALTYHYETQCIPTPAAWYAHQLPVWFQKFSVVATYVIEIAVPLLFFMPIRRLRLFAFYCQVLLQILIILTGNYNFFNALTIVLAFSLLDEEHMGRWMGRGKRKHGSSAWPPTLLSFLSTLLELATYALLLYWSVHYFSLEIDWEKGLLESKVAFTYHEFTQWLRAVTLPLVGLGFLSLSWEILSALYRCACVRGFFWKLWATLQWAVFATATVGMFAISLVPFTYIDYESNGKLWPGIHQMFSAVERFQVVNSYGLFRRMTGVGGRPEVVLEGSYDKQSWTEIEFMYKPGNVSAAPAVVAPHQPRLDWQMWFAALAHHSSSPWFASFVHRLLQGKEDVIRLVQVDEDKYPFSTQPPVYLRAQLYKYWFTHSAESGAGAAQWWRRQHVQEFFPTVSVGDPTLDGLLAQHGLKDKLPLKRPVDAFLPWLLSSVRQLSRPFSPHVVLWSLYVVAATTCLLRAMARRPRGGAPPTRHKAPKQPRGDQGEKNGQLRRKEGREAEERGEGRSRGAADGEGPRGTKRRK.

Transmembrane regions (helical) follow at residues 11–31, 79–99, 103–125, 159–179, 221–241, 257–277, 304–324, 358–378, and 398–418; these read LFLAGLAAAYLAAFVSLYLQI, MELLCLLGAVASMGALLCAPL, LLFAVLRVFYLSLYQVGQVFLYF, SVTFWLVRWLLFRLMFASGVV, FSVVATYVIEIAVPLLFFMPI, ILIILTGNYNFFNALTIVLAF, TLLSFLSTLLELATYALLLYW, VTLPLVGLGFLSLSWEILSAL, and AVFATATVGMFAISLVPFTYI. A glycan (N-linked (GlcNAc...) asparagine) is linked at Asn483. Residues 629–649 traverse the membrane as a helical segment; that stretch reads PFSPHVVLWSLYVVAATTCLL. The segment covering 654–669 has biased composition (basic residues); it reads RRPRGGAPPTRHKAPK. The interval 654–714 is disordered; it reads RRPRGGAPPT…EGPRGTKRRK (61 aa). A compositionally biased stretch (basic and acidic residues) spans 683–708; that stretch reads RRKEGREAEERGEGRSRGAADGEGPR.

The protein belongs to the lipase maturation factor family.

It localises to the endoplasmic reticulum membrane. Involved in the maturation of specific proteins in the endoplasmic reticulum. May be required for maturation and transport of active lipoprotein lipase (LPL) through the secretory pathway. In Gallus gallus (Chicken), this protein is Lipase maturation factor 2 (LMF2).